A 133-amino-acid chain; its full sequence is C-C motif chemokine 21b (133 aa).

An N-terminal signal peptide occupies residues M1–G23. 3 disulfide bridges follow: C31-C57, C32-C75, and C103-C122. The tract at residues M87–G133 is disordered. A C-terminal basic extension region spans residues K98 to G133. A compositionally biased stretch (basic residues) spans R104–C122.

Belongs to the intercrine beta (chemokine CC) family. As to quaternary structure, binds to CCR7 and to CXCR3. Interacts with PDPN; relocalizes PDPN to the basolateral membrane. Interacts with GPR174. Expressed strongly in lung, spleen, thymus, peripheral and mesentric lymph nodes. Also expressed in the testis, kidney, liver, and heart.

It is found in the secreted. In terms of biological role, inhibits hemopoiesis and stimulates chemotaxis. Chemotactic in vitro for thymocytes and activated T-cells, but not for B-cells, macrophages, or neutrophils. Potent mesangial cell chemoattractant. Shows preferential activity towards naive T-cells. May play a role in mediating homing of lymphocytes to secondary lymphoid organs. The chain is C-C motif chemokine 21b (Ccl21b) from Mus musculus (Mouse).